A 303-amino-acid polypeptide reads, in one-letter code: MDNNEKEKSKSELLVVTGLSGAGKSLVIQCLEDMGYFCVDNLPPVLLPKFVELMEQGNPSLRKVAIAIDLRGKELFNSLVAVVDKVKSESDVIIDVMFLEASTEKLISRYKETRRAHPLMEQGKRSLINAINDEREHLSQIRSIANFVIDTTKLSPKELKERIRRYYEDEEFETFTINVTSFGFKHGIQMDADLVFDVRFLPNPYYVVDLRPLTGLDKDVYNYVMKWKETEIFFEKLTDLLDFMIPGYKKEGKSQLVIAIGCTGGQHRSVALAERLGNYLNEVFEYNVYVHHRDAHIESGEKK.

18–25 (GLSGAGKS) serves as a coordination point for ATP. 69 to 72 (DLRG) contacts GTP.

This sequence belongs to the RapZ-like family.

Displays ATPase and GTPase activities. This Staphylococcus aureus (strain USA300 / TCH1516) protein is Nucleotide-binding protein USA300HOU_0794.